We begin with the raw amino-acid sequence, 697 residues long: SPX domain-containing membrane protein At1g63010 (697 aa).

Residues 2–145 form the SPX domain; the sequence is VAFGKYLQRK…GYRFADYYVK (144 aa). Helical transmembrane passes span 247–267, 278–298, 315–335, 337–356, 375–395, and 411–431; these read FNSL…TYII, LGAA…AQVF, LVFS…AYDA, SIAL…ARAV, AGFV…AGLL, and LPGW…CISF. The disordered stretch occupies residues 439-459; it reads EDGEKNNRNETTSDRVESSRV. 5 helical membrane passes run 513–533, 544–564, 576–596, 604–624, and 670–690; these read LLIY…SSVI, SVAI…ILVG, ILLT…NLFV, VISG…NLSL, and LLNA…VATC.

This sequence belongs to the major facilitator superfamily.

The protein localises to the membrane. This is SPX domain-containing membrane protein At1g63010 from Arabidopsis thaliana (Mouse-ear cress).